The sequence spans 373 residues: Sterol-4-alpha-carboxylate 3-dehydrogenase, decarboxylating (373 aa).

Position 1 is an N-acetylmethionine (Met-1). Residue Thr-22 is modified to Phosphothreonine. Tyr-172 (proton acceptor) is an active-site residue. Lys-176 provides a ligand contact to NAD(+). Residues 298-318 (WVAYYLALLLSLLVMVISPVI) traverse the membrane as a helical segment. The Prevents secretion from ER signature appears at 370–373 (RRVK).

The protein belongs to the 3-beta-HSD family. Homodimer. Brain, heart, liver, lung, kidney, skin and placenta.

The protein resides in the endoplasmic reticulum membrane. Its subcellular location is the lipid droplet. The catalysed reaction is a 3beta-hydroxysteroid-4alpha-carboxylate + NADP(+) = a 3-oxosteroid + CO2 + NADPH. The enzyme catalyses a 3beta-hydroxysteroid-4alpha-carboxylate + NAD(+) = a 3-oxosteroid + CO2 + NADH. It carries out the reaction 4alpha-carboxyzymosterol + NADP(+) = zymosterone + CO2 + NADPH. It catalyses the reaction 4alpha-carboxy-4beta-methyl-5alpha-cholest-8-en-3beta-ol + NADP(+) = 4alpha-methyl-5alpha-cholest-8-en-3-one + CO2 + NADPH. The catalysed reaction is 4alpha-carboxy-5alpha-cholest-8-ene-3beta-ol + NADP(+) = 5alpha-cholest-8-en-3-one + CO2 + NADPH. The enzyme catalyses 4beta-methylzymosterol-4alpha-carboxylate + NADP(+) = 3-dehydro-4-methylzymosterol + CO2 + NADPH. It carries out the reaction 4beta-methylzymosterol-4alpha-carboxylate + NAD(+) = 3-dehydro-4-methylzymosterol + CO2 + NADH. It catalyses the reaction 4alpha-carboxy-5alpha-cholest-8-ene-3beta-ol + NAD(+) = 5alpha-cholest-8-en-3-one + CO2 + NADH. The catalysed reaction is 4alpha-carboxy-4beta-methyl-5alpha-cholest-8-en-3beta-ol + NAD(+) = 4alpha-methyl-5alpha-cholest-8-en-3-one + CO2 + NADH. The enzyme catalyses 4alpha-carboxyzymosterol + NAD(+) = zymosterone + CO2 + NADH. It functions in the pathway steroid biosynthesis; zymosterol biosynthesis; zymosterol from lanosterol: step 4/6. In terms of biological role, catalyzes the NAD(P)(+)-dependent oxidative decarboxylation of the C4 methyl groups of 4-alpha-carboxysterols in post-squalene cholesterol biosynthesis. Also plays a role in the regulation of the endocytic trafficking of EGFR. The protein is Sterol-4-alpha-carboxylate 3-dehydrogenase, decarboxylating (NSDHL) of Homo sapiens (Human).